The following is a 44-amino-acid chain: Pandinin-1 (44 aa).

As to expression, expressed by the venom gland.

It is found in the secreted. It localises to the target cell membrane. Disrupts cell membranes through formation of pores. Strong antimicrobial activity against Gram-positive bacteria B.subtilis, S.epidermidis, E.faecalis and S.aureus. Less active against Gram-negative bacteria P.aeruginosa and E.coli. Has no antifungal or hemolytic activity. The polypeptide is Pandinin-1 (Pandinus imperator (Emperor scorpion)).